A 333-amino-acid chain; its full sequence is Lipoyl synthase (333 aa).

Positions 1 to 29 are disordered; the sequence is MTDSAAGATEVATPATPSNKPYDATAKQK. [4Fe-4S] cluster contacts are provided by Cys80, Cys85, Cys91, Cys106, Cys110, Cys113, and Ser320. The Radical SAM core domain maps to 91–309; that stretch reads CFGKGTATFM…EEKAYEMGFT (219 aa).

Belongs to the radical SAM superfamily. Lipoyl synthase family. The cofactor is [4Fe-4S] cluster.

Its subcellular location is the cytoplasm. The catalysed reaction is [[Fe-S] cluster scaffold protein carrying a second [4Fe-4S](2+) cluster] + N(6)-octanoyl-L-lysyl-[protein] + 2 oxidized [2Fe-2S]-[ferredoxin] + 2 S-adenosyl-L-methionine + 4 H(+) = [[Fe-S] cluster scaffold protein] + N(6)-[(R)-dihydrolipoyl]-L-lysyl-[protein] + 4 Fe(3+) + 2 hydrogen sulfide + 2 5'-deoxyadenosine + 2 L-methionine + 2 reduced [2Fe-2S]-[ferredoxin]. It participates in protein modification; protein lipoylation via endogenous pathway; protein N(6)-(lipoyl)lysine from octanoyl-[acyl-carrier-protein]: step 2/2. Functionally, catalyzes the radical-mediated insertion of two sulfur atoms into the C-6 and C-8 positions of the octanoyl moiety bound to the lipoyl domains of lipoate-dependent enzymes, thereby converting the octanoylated domains into lipoylated derivatives. The chain is Lipoyl synthase from Ralstonia pickettii (strain 12J).